We begin with the raw amino-acid sequence, 355 residues long: DNA polymerase IV (355 aa).

Positions Ile7–Gly188 constitute a UmuC domain. Residues Asp11 and Asp106 each coordinate Mg(2+). The active site involves Glu107.

This sequence belongs to the DNA polymerase type-Y family. As to quaternary structure, monomer. The cofactor is Mg(2+).

It localises to the cytoplasm. It catalyses the reaction DNA(n) + a 2'-deoxyribonucleoside 5'-triphosphate = DNA(n+1) + diphosphate. Poorly processive, error-prone DNA polymerase involved in untargeted mutagenesis. Copies undamaged DNA at stalled replication forks, which arise in vivo from mismatched or misaligned primer ends. These misaligned primers can be extended by PolIV. Exhibits no 3'-5' exonuclease (proofreading) activity. May be involved in translesional synthesis, in conjunction with the beta clamp from PolIII. The sequence is that of DNA polymerase IV from Legionella pneumophila (strain Corby).